The primary structure comprises 115 residues: NAD(P)H-quinone oxidoreductase subunit M (115 aa).

The protein belongs to the complex I NdhM subunit family. NDH-1 can be composed of about 15 different subunits; different subcomplexes with different compositions have been identified which probably have different functions.

It is found in the cellular thylakoid membrane. The catalysed reaction is a plastoquinone + NADH + (n+1) H(+)(in) = a plastoquinol + NAD(+) + n H(+)(out). It catalyses the reaction a plastoquinone + NADPH + (n+1) H(+)(in) = a plastoquinol + NADP(+) + n H(+)(out). Its function is as follows. NDH-1 shuttles electrons from an unknown electron donor, via FMN and iron-sulfur (Fe-S) centers, to quinones in the respiratory and/or the photosynthetic chain. The immediate electron acceptor for the enzyme in this species is believed to be plastoquinone. Couples the redox reaction to proton translocation, and thus conserves the redox energy in a proton gradient. Cyanobacterial NDH-1 also plays a role in inorganic carbon-concentration. The polypeptide is NAD(P)H-quinone oxidoreductase subunit M (Prochlorococcus marinus subsp. pastoris (strain CCMP1986 / NIES-2087 / MED4)).